The sequence spans 451 residues: MPGRTRPSCRLAITFTPRPDSATPRAGRAAPATGRRSNRSRSTLSATASPMPRRPHRIRSLGLLDRRDNYLDMLRTGGGIESPLIEAGALSDAMGLEPGCGRLWIKADHGLPVAGSIKARGGIHEVLEFAETLAVREGLLSPGQDCRVLAEPAAREVFGRHQVAVGSTGNLGLSIGVAASALGFRAAVHMSADAKEWKKERLRRRGVEVVEHAGDYERAVAAGRSQAQADPFSHFVDDERSLSLLLGYSAAALHLRGQLAEQGIVVDAKHPLFVYLPCGVGGAPAGITFGLRQLLGPHVHCFFAEPVQSPCFLVQMAAPAGTHPSVYDLGLTNRTEADGLAVPRASLLAAGLMQPLLSGIFTVRDDTLFEHLVRVLDATGERIEPSAAAGFSGPALLTGSDGGRLWLRAQGLDVQLPQATHLVWTTGGLFVPEAEHQRFEARGRSLLEAAA.

The disordered stretch occupies residues 1 to 55; sequence MPGRTRPSCRLAITFTPRPDSATPRAGRAAPATGRRSNRSRSTLSATASPMPRRP. Low complexity predominate over residues 22–35; sequence ATPRAGRAAPATGR. At Lys118 the chain carries N6-(pyridoxal phosphate)lysine.

The protein belongs to the serine/threonine dehydratase family. DsdA subfamily. Pyridoxal 5'-phosphate serves as cofactor.

The catalysed reaction is D-serine = pyruvate + NH4(+). The polypeptide is Probable D-serine dehydratase (Paracidovorax citrulli (strain AAC00-1) (Acidovorax citrulli)).